A 156-amino-acid chain; its full sequence is Translationally controlled tumor protein 2 (156 aa).

A TCTP domain is found at 1 to 156 (MLVYQDILTG…LAYGLKEIKC (156 aa)).

It belongs to the TCTP family. Expressed in stems, cauline leaves, minor veins of rosette leaves, roots, lateral root primordia, vascular tissues of petioles and inflorescences, base of siliques, papillae and ovules. Not detected in root meristems, anthers or seeds. Expressed in stomata, trichomes and root cortex.

The protein localises to the nucleus. The protein resides in the cytoplasm. In terms of biological role, regulates proliferation. Induces whole plant regeneration when expressed in heterologous systems. Involved in root growth and lateral root development, with a probable role in cell reprogramming. The long-distance transport of TCTP RNA and/or protein in plants may have an important role in regulation of growth and development. The protein is Translationally controlled tumor protein 2 of Arabidopsis thaliana (Mouse-ear cress).